Here is a 458-residue protein sequence, read N- to C-terminus: Argininosuccinate lyase (458 aa).

The protein belongs to the lyase 1 family. Argininosuccinate lyase subfamily.

The protein resides in the cytoplasm. The enzyme catalyses 2-(N(omega)-L-arginino)succinate = fumarate + L-arginine. Its pathway is amino-acid biosynthesis; L-arginine biosynthesis; L-arginine from L-ornithine and carbamoyl phosphate: step 3/3. In Neisseria meningitidis serogroup C / serotype 2a (strain ATCC 700532 / DSM 15464 / FAM18), this protein is Argininosuccinate lyase.